Here is an 837-residue protein sequence, read N- to C-terminus: V-type proton ATPase 116 kDa subunit a 1 (837 aa).

The Cytoplasmic portion of the chain corresponds to 1-388; that stretch reads MGELFRSEEM…DAYGIGTYRE (388 aa). 2 positions are modified to phosphothreonine: T250 and T360. Position 364 is a phosphotyrosine (Y364). Residues 389–407 form a helical membrane-spanning segment; sequence INPAPYTIITFPFLFAVMF. The Vacuolar portion of the chain corresponds to 408 to 409; sequence GD. The chain crosses the membrane as a helical span at residues 410 to 426; sequence FGHGILMTLFAVWMVLR. Residues 427–441 are Cytoplasmic-facing; that stretch reads ESRILSQKNENEMFS. The helical transmembrane segment at 442-471 threads the bilayer; sequence TVFSGRYIILLMGVFSMYTGLIYNDCFSKS. Over 472 to 534 the chain is Vacuolar; that stretch reads LNIFGSSWSV…ATNKLTFLNS (63 aa). N-linked (GalNAc...) asparagine glycosylation occurs at N488. A helical transmembrane segment spans residues 535–554; sequence FKMKMSVILGIIHMLFGVSL. The Cytoplasmic segment spans residues 555-572; that stretch reads SLFNHIYFKKPLNIYFGF. Residues 573-593 traverse the membrane as a helical segment; that stretch reads IPEIIFMTSLFGYLVILIFYK. Over 594-638 the chain is Vacuolar; it reads WTAYDAHTSENAPSLLIHFINMFLFSYPESGYSMLYSGQKGIQCF. The helical transmembrane segment at 639–658 threads the bilayer; it reads LVVVALLCVPWMLLFKPLVL. The Cytoplasmic portion of the chain corresponds to 659 to 724; that stretch reads RRQYLRRKHL…DTMVHQAIHT (66 aa). A helical transmembrane segment spans residues 725-749; it reads IEYCLGCISNTASYLRLWALSLAHA. Over 750–770 the chain is Vacuolar; that stretch reads QLSEVLWTMVIHIGLSVKSLA. Residues 771 to 809 form a helical membrane-spanning segment; that stretch reads GGLVLFFFFTAFATLTVAILLIMEGLSAFLHALRLHWVE. Residues 810-837 lie on the Cytoplasmic side of the membrane; sequence FQNKFYSGTGFKFLPFSFEHIREGKFEE.

Belongs to the V-ATPase 116 kDa subunit family. V-ATPase is a heteromultimeric enzyme made up of two complexes: the ATP-hydrolytic V1 complex and the proton translocation V0 complex. The V1 complex consists of three catalytic AB heterodimers that form a heterohexamer, three peripheral stalks each consisting of EG heterodimers, one central rotor including subunits D and F, and the regulatory subunits C and H. The proton translocation complex V0 consists of the proton transport subunit a, a ring of proteolipid subunits c9c'', rotary subunit d, subunits e and f, and the accessory subunits ATP6AP1/Ac45 and ATP6AP2/PRR. Interacts with SPAAR.

The protein resides in the cytoplasmic vesicle. It localises to the clathrin-coated vesicle membrane. It is found in the secretory vesicle. The protein localises to the synaptic vesicle membrane. Its subcellular location is the melanosome. In terms of biological role, subunit of the V0 complex of vacuolar(H+)-ATPase (V-ATPase), a multisubunit enzyme composed of a peripheral complex (V1) that hydrolyzes ATP and a membrane integral complex (V0) that transports protons across cellular membranes. V-ATPase is responsible for the acidification of various organelles, such as lysosomes, endosomes, the trans-Golgi network, and secretory granules, including synaptic vesicles. In certain cell types, can be exported to the plasma membrane, where it is involved in the acidification of the extracellular environment. Required for assembly and activity of the vacuolar ATPase. Through its action on compartment acidification, plays an essential role in neuronal development in terms of integrity and connectivity of neurons. This Homo sapiens (Human) protein is V-type proton ATPase 116 kDa subunit a 1 (ATP6V0A1).